We begin with the raw amino-acid sequence, 566 residues long: Proline--tRNA ligase 1 (566 aa).

The protein belongs to the class-II aminoacyl-tRNA synthetase family. ProS type 1 subfamily. Homodimer.

It is found in the cytoplasm. The enzyme catalyses tRNA(Pro) + L-proline + ATP = L-prolyl-tRNA(Pro) + AMP + diphosphate. Its function is as follows. Catalyzes the attachment of proline to tRNA(Pro) in a two-step reaction: proline is first activated by ATP to form Pro-AMP and then transferred to the acceptor end of tRNA(Pro). As ProRS can inadvertently accommodate and process non-cognate amino acids such as alanine and cysteine, to avoid such errors it has two additional distinct editing activities against alanine. One activity is designated as 'pretransfer' editing and involves the tRNA(Pro)-independent hydrolysis of activated Ala-AMP. The other activity is designated 'posttransfer' editing and involves deacylation of mischarged Ala-tRNA(Pro). The misacylated Cys-tRNA(Pro) is not edited by ProRS. The protein is Proline--tRNA ligase 1 of Bacillus cereus (strain ATCC 14579 / DSM 31 / CCUG 7414 / JCM 2152 / NBRC 15305 / NCIMB 9373 / NCTC 2599 / NRRL B-3711).